Consider the following 115-residue polypeptide: U3-lycotoxin-Ls1l (115 aa).

Positions 1-20 (MKFVLLFGVLLVTLFSYSSA) are cleaved as a signal peptide. Residues 21 to 44 (EMLDDFDQADEDELLSLIEKEEAR) constitute a propeptide that is removed on maturation. Disulfide bonds link Cys55/Cys72, Cys62/Cys87, and Cys74/Cys85.

This sequence belongs to the neurotoxin 19 (CSTX) family. 01 subfamily. In terms of tissue distribution, expressed by the venom gland.

Its subcellular location is the secreted. The polypeptide is U3-lycotoxin-Ls1l (Lycosa singoriensis (Wolf spider)).